We begin with the raw amino-acid sequence, 352 residues long: Holliday junction branch migration complex subunit RuvB (352 aa).

The interval 4-191 is large ATPase domain (RuvB-L); sequence TDKLAAPARV…FGIVARLEFY (188 aa). ATP contacts are provided by residues L30, R31, G72, K75, T76, T77, 138 to 140, R181, Y191, and R228; that span reads EDY. Residue T76 coordinates Mg(2+). A small ATPAse domain (RuvB-S) region spans residues 192–262; it reads TADELARIVT…MADAALAMLD (71 aa). The interval 265–352 is head domain (RuvB-H); sequence SVGFDLMDRK…SGASELFGDA (88 aa). DNA is bound by residues R301, R320, and R325.

Belongs to the RuvB family. As to quaternary structure, homohexamer. Forms an RuvA(8)-RuvB(12)-Holliday junction (HJ) complex. HJ DNA is sandwiched between 2 RuvA tetramers; dsDNA enters through RuvA and exits via RuvB. An RuvB hexamer assembles on each DNA strand where it exits the tetramer. Each RuvB hexamer is contacted by two RuvA subunits (via domain III) on 2 adjacent RuvB subunits; this complex drives branch migration. In the full resolvosome a probable DNA-RuvA(4)-RuvB(12)-RuvC(2) complex forms which resolves the HJ.

The protein resides in the cytoplasm. It carries out the reaction ATP + H2O = ADP + phosphate + H(+). In terms of biological role, the RuvA-RuvB-RuvC complex processes Holliday junction (HJ) DNA during genetic recombination and DNA repair, while the RuvA-RuvB complex plays an important role in the rescue of blocked DNA replication forks via replication fork reversal (RFR). RuvA specifically binds to HJ cruciform DNA, conferring on it an open structure. The RuvB hexamer acts as an ATP-dependent pump, pulling dsDNA into and through the RuvAB complex. RuvB forms 2 homohexamers on either side of HJ DNA bound by 1 or 2 RuvA tetramers; 4 subunits per hexamer contact DNA at a time. Coordinated motions by a converter formed by DNA-disengaged RuvB subunits stimulates ATP hydrolysis and nucleotide exchange. Immobilization of the converter enables RuvB to convert the ATP-contained energy into a lever motion, pulling 2 nucleotides of DNA out of the RuvA tetramer per ATP hydrolyzed, thus driving DNA branch migration. The RuvB motors rotate together with the DNA substrate, which together with the progressing nucleotide cycle form the mechanistic basis for DNA recombination by continuous HJ branch migration. Branch migration allows RuvC to scan DNA until it finds its consensus sequence, where it cleaves and resolves cruciform DNA. The protein is Holliday junction branch migration complex subunit RuvB of Cupriavidus necator (strain ATCC 17699 / DSM 428 / KCTC 22496 / NCIMB 10442 / H16 / Stanier 337) (Ralstonia eutropha).